Reading from the N-terminus, the 584-residue chain is Endogenous retrovirus group FC1 Env polyprotein (584 aa).

The signal sequence occupies residues 1-22 (MARPSPLCLLLLLTLLPPIVPS). The Extracellular segment spans residues 23-514 (NSLLTEPPFR…NYGGGWWQSP (492 aa)). N-linked (GlcNAc...) asparagine glycans are attached at residues Asn69 and Asn247. Residues 251 to 254 (CFLC) carry the CXXC motif. N-linked (GlcNAc...) asparagine glycosylation is found at Asn272, Asn276, Asn308, Asn313, Asn322, Asn334, Asn342, and Asn346. Residues 388–413 (PLVIGVSLTSSLVASGLGTGAIVHFI) form a fusion peptide region. A CKS-17 motif is present at residues 449-465 (MQNRRALDLLTADKGGT). A disulfide bridge links Cys466 with Cys473. The short motif at 466 to 474 (CMFLGEECC) is the CX6CC element. N-linked (GlcNAc...) asparagine glycosylation is present at Asn478. The helical transmembrane segment at 515–540 (LTTWIIPFISPILIICLLLLIAPCVL) threads the bilayer. Over 541–584 (KFIKNRISEVSRVTVNQMLLHPYSRLPTSEDHYDVALTQQEAAR) the chain is Cytoplasmic.

It belongs to the gamma type-C retroviral envelope protein family. HERV class-I F(c)1 env subfamily. In terms of assembly, the surface (SU) and transmembrane (TM) proteins form a heterodimer. SU and TM are attached by noncovalent interactions or by a labile interchain disulfide bond. Specific enzymatic cleavages in vivo yield the mature SU and TM proteins. Post-translationally, the CXXC motif is highly conserved across a broad range of retroviral envelope proteins. It is thought to participate in the formation of a labile disulfide bond possibly with the CX6CC motif present in the transmembrane protein.

It localises to the virion. The protein localises to the cell membrane. Retroviral envelope proteins mediate receptor recognition and membrane fusion during early infection. Endogenous envelope proteins may have kept, lost or modified their original function during evolution. This endogenous envelope protein has lost its original fusogenic properties. In terms of biological role, SU mediates receptor recognition. Its function is as follows. TM anchors the envelope heterodimer to the viral membrane through one transmembrane domain. The other hydrophobic domain, called fusion peptide, mediates fusion of the viral membrane with the target cell membrane. The protein is Endogenous retrovirus group FC1 Env polyprotein (ERVFC1) of Pan troglodytes (Chimpanzee).